The sequence spans 1168 residues: Homeodomain-interacting protein kinase 2 (1168 aa).

The residue at position 16 (S16) is a Phosphoserine. K32 participates in a covalent cross-link: Glycyl lysine isopeptide (Lys-Gly) (interchain with G-Cter in SUMO); alternate. A Glycyl lysine isopeptide (Lys-Gly) (interchain with G-Cter in SUMO2); alternate cross-link involves residue K32. The interval 97–230 (SASSTSVTGQ…TNEIVAIKIL (134 aa)) is transcriptional corepression. Phosphoserine is present on residues S118 and S135. A Phosphothreonine modification is found at T141. The interaction with DAXX stretch occupies residues 189-520 (HEVLCSMTNT…DADKRITPIE (332 aa)). Positions 199 to 527 (YEVLEFLGRG…PIETLNHPFV (329 aa)) constitute a Protein kinase domain. Residues 205–213 (LGRGTFGQV) and K228 contribute to the ATP site. Residues T252 and T273 each carry the phosphothreonine modification. D324 (proton acceptor) is an active-site residue. Phosphotyrosine is present on Y361. The residue at position 441 (S441) is a Phosphoserine. Phosphothreonine occurs at positions 482, 517, and 566. An interaction with SKI and SMAD1 region spans residues 539–816 (THVKSCFQNM…KENTPPRCAM (278 aa)). The interaction with DAZAP2 stretch occupies residues 595-772 (PSAASMAAVA…MRQQPTSTTS (178 aa)). Phosphoserine occurs at positions 607 and 641. T660 is subject to Phosphothreonine. The interaction with POU4F1 stretch occupies residues 724 to 869 (RNTHAHGSHY…ITISSDTDEE (146 aa)). Residues 746-848 (HVTLPAAQPL…TRERQRQTIV (103 aa)) form an interaction with CTBP1 region. The interaction with HMGA1 stretch occupies residues 759-869 (VAHVMRQQPT…ITISSDTDEE (111 aa)). A disordered region spans residues 764–820 (RQQPTSTTSSRKSKQHQPSMRNVSTCEVTSSQSTSSPQRSKRVKENTPPRCAMVHSS). Residues 765–791 (QQPTSTTSSRKSKQHQPSMRNVSTCEV) show a composition bias toward polar residues. The short motif at 774 to 777 (RKSK) is the Nuclear localization signal 1 (NLS1) element. A phosphoserine mark is found at S787 and S799. Positions 792-801 (TSSQSTSSPQ) are enriched in low complexity. The Nuclear localization signal 2 (NLS2) signature appears at 804 to 807 (KRVK). The segment at 812–907 (PRCAMVHSSP…YSDSSSNTSP (96 aa)) is interaction with TP53 and TP73. The segment at 845 to 879 (QTIVIPDTPSPTVSVITISSDTDEEEEQKHAPTST) is interaction with UBE2I. The segment at 845-952 (QTIVIPDTPS…PLKTQASEVL (108 aa)) is localization to nuclear speckles. The segment at 845-952 (QTIVIPDTPS…PLKTQASEVL (108 aa)) is required for localization to nuclear speckles. Residues 854 to 876 (SPTVSVITISSDTDEEEEQKHAP) are interaction with UBL1. An SUMO interaction motifs (SIM); required for nuclear localization and kinase activity region spans residues 856–880 (TVSVITISSDTDEEEEQKHAPTSTV). Positions 894 to 936 (HDSPYSDSSSNTSPYSVQQRTGHNGTNTLDTKGALENHCTGNP) are disordered. Over residues 895–909 (DSPYSDSSSNTSPYS) the composition is skewed to low complexity. Residue S906 is modified to Phosphoserine. The interval 907–1022 (PYSVQQRTGH…LSQAQPHMAT (116 aa)) is interaction with AXIN1. Over residues 910–923 (VQQRTGHNGTNTLD) the composition is skewed to polar residues. Residues K925 and K945 each participate in a glycyl lysine isopeptide (Lys-Gly) (interchain with G-Cter in SUMO2) cross-link. The interval 956–1168 (DSLGPAVSTG…PAKVNQYPYI (213 aa)) is autoinhibitory domain (AID). Positions 960–1030 (PAVSTGHHSS…ATDRTGSHRR (71 aa)) are disordered. S963 carries the post-translational modification Phosphoserine. 2 stretches are compositionally biased toward low complexity: residues 965–991 (GHHS…GSSS) and 998–1018 (QQRP…QAQP). Residues S1014, S1125, and S1158 each carry the phosphoserine modification. A Glycyl lysine isopeptide (Lys-Gly) (interchain with G-Cter in SUMO) cross-link involves residue K1161.

Belongs to the protein kinase superfamily. CMGC Ser/Thr protein kinase family. HIPK subfamily. Interacts with CREB1, SIAH1, WSB1, CBX4, TRADD, p53/TP53, TP73, TP63, CREBBP, DAXX, P53DINP1, SKI, SMAD1, SMAD2 and SMAD3, but not SMAD4. Interacts with ATF1, PML, RUNX1, EP300, NKX1-2, NKX2-5, UBE2I, HMGA1, CTBP1, AXIN1, NLK, MYB, POU4F1, POU4F2, POU4F3, UBE2I, UBL1 and ZBTB4. Probably part of a complex consisting of p53/TP53, HIPK2 and AXIN1. Interacts with SP100; positively regulates TP53-dependent transcription. Interacts with DAZAP2; the interaction results in phosphorylation of DAZAP2 which causes localization of DAZAP2 to the nucleus, reduces interaction of DAZAP2 with HIPK2 and prevents DAZAP2-dependent degradation of HIPK2. Interacts with SIAH1; the interaction is promoted by DAZAP2 and results in SIAH1-mediated ubiquitination and subsequent proteasomal degradation of HIPK2. Post-translationally, autophosphorylation at Tyr-361 in the activation loop activates the kinase and promotes nuclear localization. Sumoylated. When conjugated it is directed to nuclear speckles. Desumoylated by SENP1. Sumoylation on Lys-32 is promoted by the E3 SUMO-protein ligase CBX4. In terms of processing, ubiquitinated by FBXO3, WSB1 and SIAH1, leading to rapid proteasome-dependent degradation. The degradation mediated by FBXO3, but not ubiquitination, is prevented in the presence of PML. The degradation mediated by WSB1 and SIAH1 is reversibly reduced upon DNA damage. Post-translationally, cleaved at Asp-895 and Asp-956 by CASP6 in a p53/TP53-dependent manner. The cleaved form lacks the autoinhibitory C-terminal domain (AID), resulting in a hyperactive kinase, which potentiates p53/TP53 Ser-46 phosphorylation and subsequent activation of the cell death machinery.

Its subcellular location is the nucleus. The protein resides in the PML body. It is found in the cytoplasm. It catalyses the reaction L-seryl-[protein] + ATP = O-phospho-L-seryl-[protein] + ADP + H(+). The enzyme catalyses L-threonyl-[protein] + ATP = O-phospho-L-threonyl-[protein] + ADP + H(+). Its function is as follows. Serine/threonine-protein kinase involved in transcription regulation, p53/TP53-mediated cellular apoptosis and regulation of the cell cycle. Acts as a corepressor of several transcription factors, including SMAD1 and POU4F1/Brn3a and probably NK homeodomain transcription factors. Phosphorylates PDX1, ATF1, PML, p53/TP53, CREB1, CTBP1, CBX4, RUNX1, EP300, CTNNB1, HMGA1, ZBTB4 and DAZAP2. Inhibits cell growth and promotes apoptosis through the activation of p53/TP53 both at the transcription level and at the protein level (by phosphorylation and indirect acetylation). The phosphorylation of p53/TP53 may be mediated by a p53/TP53-HIPK2-AXIN1 complex. Involved in the response to hypoxia by acting as a transcriptional co-suppressor of HIF1A. Mediates transcriptional activation of TP73. In response to TGFB, cooperates with DAXX to activate JNK. Negative regulator through phosphorylation and subsequent proteasomal degradation of CTNNB1 and the antiapoptotic factor CTBP1. In the Wnt/beta-catenin signaling pathway acts as an intermediate kinase between MAP3K7/TAK1 and NLK to promote the proteasomal degradation of MYB. Phosphorylates CBX4 upon DNA damage and promotes its E3 SUMO-protein ligase activity. Activates CREB1 and ATF1 transcription factors by phosphorylation in response to genotoxic stress. In response to DNA damage, stabilizes PML by phosphorylation. PML, HIPK2 and FBXO3 may act synergically to activate p53/TP53-dependent transactivation. Promotes angiogenesis, and is involved in erythroid differentiation, especially during fetal liver erythropoiesis. Phosphorylation of RUNX1 and EP300 stimulates EP300 transcription regulation activity. Triggers ZBTB4 protein degradation in response to DNA damage. In response to DNA damage, phosphorylates DAZAP2 which localizes DAZAP2 to the nucleus, reduces interaction of DAZAP2 with HIPK2 and prevents DAZAP2-dependent ubiquitination of HIPK2 by E3 ubiquitin-protein ligase SIAH1 and subsequent proteasomal degradation. Modulates HMGA1 DNA-binding affinity. In response to high glucose, triggers phosphorylation-mediated subnuclear localization shifting of PDX1. Involved in the regulation of eye size, lens formation and retinal lamination during late embryogenesis. This Mesocricetus auratus (Golden hamster) protein is Homeodomain-interacting protein kinase 2 (Hipk2).